We begin with the raw amino-acid sequence, 290 residues long: UPF0507 protein YML003W (290 aa).

The protein belongs to the UPF0507 family.

This chain is UPF0507 protein YML003W, found in Saccharomyces cerevisiae (strain ATCC 204508 / S288c) (Baker's yeast).